The chain runs to 257 residues: Galactitol 2-dehydrogenase (257 aa).

NAD(+) is bound by residues 21 to 23, 67 to 68, Asn94, Tyr162, and Lys166; these read RAI and DV. Tyr162 (proton acceptor) is an active-site residue.

This sequence belongs to the short-chain dehydrogenases/reductases (SDR) family. In terms of assembly, homotetramer. Requires Mg(2+) as cofactor.

It catalyses the reaction galactitol + NAD(+) = keto-D-tagatose + NADH + H(+). Its function is as follows. Catalyzes the oxidation of galactitol to D-tagatose. Also catalyzes the oxidation of a wide range of substrates, including polyvalent aliphatic alcohols and polyols, to the corresponding ketones and ketoses. Galactitol is the preferred substrate. This is Galactitol 2-dehydrogenase from Rhizobium johnstonii (strain DSM 114642 / LMG 32736 / 3841) (Rhizobium leguminosarum bv. viciae).